The following is a 361-amino-acid chain: uncharacterized protein (361 aa).

This is an uncharacterized protein from Escherichia coli (strain K12).